A 306-amino-acid chain; its full sequence is MFSDSDSSDEELSRIITDIDESPQDIQQSLHLRAGVSPEARVPPGGLTQEEWTIDYFSTYHTPLLNPGIPHELTQRCTDYTASILRRASAKMIQWDYVFYLLPRVWIMFPFIAREGLSHLTHLLTLTTSVLSATSLVFGWDLTVIELCNEMNIQGVYLPEVIEWLAQFSFLFTHVTLIVVSDGMMDLLLMFPMDIEEQPLAINIALHALQTSYTIMTPILFASPLLRIISCVLYACGHCPSARMLYAYTIMNRYTGESIAEMHTGFRCFRDQMIAYDMEFTNFLRDLTEEETPVLEITEPEPSPTE.

Transmembrane regions (helical) follow at residues 92-112 (MIQW…FPFI), 120-140 (LTHL…VFGW), and 161-181 (VIEW…IVVS).

In terms of assembly, interacts with host RACK1.

It localises to the host cytoplasm. It is found in the host cell membrane. The chain is ORF-B protein from Sander vitreus (Walleye).